We begin with the raw amino-acid sequence, 265 residues long: SPbeta prophage-derived uncharacterized protein YomU (265 aa).

A disordered region spans residues 238-265 (KADGTKGVVTSDEGTGSSQSSDLGGTTE). The segment covering 249–265 (DEGTGSSQSSDLGGTTE) has biased composition (polar residues).

This is SPbeta prophage-derived uncharacterized protein YomU (yomU) from Bacillus subtilis (strain 168).